The sequence spans 348 residues: DnaJ homolog subfamily B member 5 (348 aa).

The J domain occupies 4–68 (DYYKILGIPS…KKRGLYDQYG (65 aa)).

In Homo sapiens (Human), this protein is DnaJ homolog subfamily B member 5 (DNAJB5).